The chain runs to 363 residues: Protein-glutamate methylesterase/protein-glutamine glutaminase 1 (363 aa).

The 118-residue stretch at 7 to 124 (KVLIVDDSAL…SRGMQEYARE (118 aa)) folds into the Response regulatory domain. Aspartate 58 bears the 4-aspartylphosphate mark. Positions 164–356 (FSSTEKIIVI…RRLFGWLESQ (193 aa)) constitute a CheB-type methylesterase domain. Active-site residues include serine 176, histidine 202, and aspartate 298.

This sequence belongs to the CheB family. In terms of processing, phosphorylated by CheA. Phosphorylation of the N-terminal regulatory domain activates the methylesterase activity.

It localises to the cytoplasm. The catalysed reaction is [protein]-L-glutamate 5-O-methyl ester + H2O = L-glutamyl-[protein] + methanol + H(+). It catalyses the reaction L-glutaminyl-[protein] + H2O = L-glutamyl-[protein] + NH4(+). Involved in chemotaxis. Part of a chemotaxis signal transduction system that modulates chemotaxis in response to various stimuli. Catalyzes the demethylation of specific methylglutamate residues introduced into the chemoreceptors (methyl-accepting chemotaxis proteins or MCP) by CheR. Also mediates the irreversible deamidation of specific glutamine residues to glutamic acid. This Geobacter metallireducens (strain ATCC 53774 / DSM 7210 / GS-15) protein is Protein-glutamate methylesterase/protein-glutamine glutaminase 1.